We begin with the raw amino-acid sequence, 1181 residues long: Clustered mitochondria protein homolog (1181 aa).

The interval 165-195 (AKAEALAKNEEVSEDEESEPEDDTPMKQSTQ) is disordered. Positions 176–187 (VSEDEESEPEDD) are enriched in acidic residues. One can recognise a Clu domain in the interval 379 to 622 (DMARNQELLS…RLAPVDIAFL (244 aa)). A disordered region spans residues 1130-1181 (GRLARQAPKPTATHQKEAPKKASKKTKGKGKGKDDKGEKLVAELKKKKAGKR). Residues 1150 to 1159 (KASKKTKGKG) show a composition bias toward basic residues. A compositionally biased stretch (basic and acidic residues) spans 1160–1173 (KGKDDKGEKLVAEL).

It belongs to the CLU family. In terms of assembly, may associate with the eukaryotic translation initiation factor 3 (eIF-3) complex.

It is found in the cytoplasm. In terms of biological role, mRNA-binding protein involved in proper cytoplasmic distribution of mitochondria. This Yarrowia lipolytica (strain CLIB 122 / E 150) (Yeast) protein is Clustered mitochondria protein homolog.